A 676-amino-acid chain; its full sequence is Transketolase 7 (676 aa).

A substrate-binding site is contributed by His36. Residues His76 and 125-127 (GPL) contribute to the thiamine diphosphate site. Mg(2+) is bound at residue Asp166. Thiamine diphosphate is bound by residues Gly167 and Asn196. Mg(2+) is bound by residues Asn196 and Ile198. Positions 273, 367, and 394 each coordinate substrate. Residue His273 participates in thiamine diphosphate binding. 2 residues coordinate thiamine diphosphate: Glu421 and Phe448. Glu421 acts as the Proton donor in catalysis. Substrate-binding residues include His472, Asp480, and Arg531.

The protein belongs to the transketolase family. Homodimer. It depends on Mg(2+) as a cofactor. Requires Ca(2+) as cofactor. The cofactor is Mn(2+). Co(2+) is required as a cofactor. Thiamine diphosphate serves as cofactor. Leaves and roots.

The enzyme catalyses D-sedoheptulose 7-phosphate + D-glyceraldehyde 3-phosphate = aldehydo-D-ribose 5-phosphate + D-xylulose 5-phosphate. Its function is as follows. Could be involved in the conversion of sugars, which are a major phenomenon in the rehydration process. In terms of biological role, catalyzes the transfer of a two-carbon ketol group from a ketose donor to an aldose acceptor, via a covalent intermediate with the cofactor thiamine pyrophosphate. The chain is Transketolase 7 (TKT7) from Craterostigma plantagineum (Blue gem).